The following is a 126-amino-acid chain: Holo-[acyl-carrier-protein] synthase (126 aa).

2 residues coordinate Mg(2+): Asp9 and Glu58.

It belongs to the P-Pant transferase superfamily. AcpS family. Mg(2+) serves as cofactor.

The protein localises to the cytoplasm. The enzyme catalyses apo-[ACP] + CoA = holo-[ACP] + adenosine 3',5'-bisphosphate + H(+). Its function is as follows. Transfers the 4'-phosphopantetheine moiety from coenzyme A to a Ser of acyl-carrier-protein. The protein is Holo-[acyl-carrier-protein] synthase of Enterobacter sp. (strain 638).